We begin with the raw amino-acid sequence, 124 residues long: Group 1 truncated hemoglobin GlbN (124 aa).

Heme is bound by residues histidine 46, histidine 70, and histidine 117.

This sequence belongs to the truncated hemoglobin family. Group I subfamily. In terms of assembly, monomer. Heme serves as cofactor.

In terms of biological role, forms a very stable complex with oxygen. The oxygen dissociation rate is 0.011 sec(-1). This is Group 1 truncated hemoglobin GlbN (glbN) from Synechocystis sp. (strain ATCC 27184 / PCC 6803 / Kazusa).